We begin with the raw amino-acid sequence, 215 residues long: Adenylate kinase (215 aa).

10-15 (GAGKGT) provides a ligand contact to ATP. Residues 30–59 (STGDMFRAAMKNNTELGRKAKSFMDNGDLV) form an NMP region. AMP-binding positions include Thr31, Arg36, 57-59 (DLV), 85-88 (GFPR), and Gln92. The LID stretch occupies residues 126 to 163 (GRWICRTCGKTYHEIYNPPKVAGKCDLDGGELYQRDDD). Residue Arg127 coordinates ATP. 2 residues coordinate Zn(2+): Cys130 and Cys133. Residue 136 to 137 (TY) coordinates ATP. Zn(2+) contacts are provided by Cys150 and Asp153. Positions 160 and 171 each coordinate AMP. Gln199 is a binding site for ATP.

The protein belongs to the adenylate kinase family. As to quaternary structure, monomer.

Its subcellular location is the cytoplasm. The catalysed reaction is AMP + ATP = 2 ADP. Its pathway is purine metabolism; AMP biosynthesis via salvage pathway; AMP from ADP: step 1/1. In terms of biological role, catalyzes the reversible transfer of the terminal phosphate group between ATP and AMP. Plays an important role in cellular energy homeostasis and in adenine nucleotide metabolism. This is Adenylate kinase from Listeria monocytogenes serotype 4a (strain HCC23).